Consider the following 237-residue polypeptide: Protein CUSTOS (237 aa).

3 disordered regions span residues 1-23, 50-69, and 97-237; these read MAAP…LDRF, LRVR…TTPE, and ISKA…LGNE. Residues 52-62 show a composition bias toward basic and acidic residues; sequence VRPDCHEHDGN. Positions 162–177 are enriched in polar residues; sequence STLQQEPQSTPSNVCD. A compositionally biased stretch (basic residues) spans 181–190; the sequence is PKKKRKKKKK. The Nucleolar localization signal (NLS1) motif lies at 182-190; it reads KKKRKKKKK. Basic and acidic residues-rich tracts occupy residues 203 to 216 and 225 to 237; these read ETMH…ELQA and KLEM…LGNE. Positions 217 to 225 match the Nucleolar localization signal (NLS2) motif; it reads KRKKKKKQK.

Belongs to the CUSTOS family. Interacts (via NLS1 and NLS2) with dvl2; the interaction is negatively regulated by Wnt stimulation. Interacts with csnk1a1. Interacts with ctnnb1; the interaction is positively regulated by Wnt stimulation. Post-translationally, phosphorylated by ck1/csnk1a1.

The protein resides in the nucleus envelope. Its function is as follows. Essential for Spemann-Mangold organizer formation and subsequent anterior head development in the embryo. Inhibits canonical Wnt signaling pathway by antagonizing nuclear import of beta-catenin (ctnnb1) during embryogenesis. The protein is Protein CUSTOS of Xenopus laevis (African clawed frog).